An 80-amino-acid polypeptide reads, in one-letter code: Protein UL148A (80 aa).

Residues 10–30 (WIPVCVVVVMTSVVLFAGLHV) form a helical membrane-spanning segment.

It localises to the host membrane. Plays a role in the down-regulation of the host NKG2D ligand MICA by utilizing the lysosomal pathway for its degradation. In turn, MICA reduction diminishes NK-cell killing of HCMV-infected cells. The sequence is that of Protein UL148A (UL148A) from Human cytomegalovirus (strain Merlin) (HHV-5).